We begin with the raw amino-acid sequence, 377 residues long: Flagellin (377 aa).

Belongs to the bacterial flagellin family.

It localises to the secreted. It is found in the bacterial flagellum. In terms of biological role, flagellin is the subunit protein which polymerizes to form the filaments of bacterial flagella. The protein is Flagellin (fla) of Clostridium tyrobutyricum.